The primary structure comprises 513 residues: Na(+)/H(+) antiporter NhaB (513 aa).

12 helical membrane-spanning segments follow: residues 23-43 (LALI…PFVA), 52-72 (IFTL…LLAI), 97-117 (LLLM…LFIF), 120-140 (LLLS…AAAF), 144-164 (FLDA…FYGI), 202-222 (LMMH…VGEP), 238-258 (FFLR…LTCL), 303-323 (AIIG…VGLI), 348-368 (TESL…AVII), 391-411 (LFYI…VGTI), 447-467 (ATPN…APLI), and 475-495 (VWMA…CVEF).

This sequence belongs to the NhaB Na(+)/H(+) (TC 2.A.34) antiporter family.

It localises to the cell inner membrane. The catalysed reaction is 2 Na(+)(in) + 3 H(+)(out) = 2 Na(+)(out) + 3 H(+)(in). Na(+)/H(+) antiporter that extrudes sodium in exchange for external protons. This Escherichia coli O45:K1 (strain S88 / ExPEC) protein is Na(+)/H(+) antiporter NhaB.